The chain runs to 680 residues: DNA-directed RNA polymerase subunit beta' (680 aa).

Cys69, Cys71, Cys87, and Cys90 together coordinate Zn(2+). Mg(2+) contacts are provided by Asp489, Asp491, and Asp493.

This sequence belongs to the RNA polymerase beta' chain family. RpoC1 subfamily. As to quaternary structure, in plastids the minimal PEP RNA polymerase catalytic core is composed of four subunits: alpha, beta, beta', and beta''. When a (nuclear-encoded) sigma factor is associated with the core the holoenzyme is formed, which can initiate transcription. It depends on Mg(2+) as a cofactor. The cofactor is Zn(2+).

The protein localises to the plastid. The protein resides in the chloroplast. It catalyses the reaction RNA(n) + a ribonucleoside 5'-triphosphate = RNA(n+1) + diphosphate. Functionally, DNA-dependent RNA polymerase catalyzes the transcription of DNA into RNA using the four ribonucleoside triphosphates as substrates. The chain is DNA-directed RNA polymerase subunit beta' from Lobularia maritima (Sweet alyssum).